Consider the following 421-residue polypeptide: Serine hydroxymethyltransferase (421 aa).

(6S)-5,6,7,8-tetrahydrofolate contacts are provided by residues L121 and G125–L127. K230 bears the N6-(pyridoxal phosphate)lysine mark. (6S)-5,6,7,8-tetrahydrofolate is bound by residues E246 and S354–F356.

It belongs to the SHMT family. In terms of assembly, homodimer. Pyridoxal 5'-phosphate is required as a cofactor.

The protein resides in the cytoplasm. The catalysed reaction is (6R)-5,10-methylene-5,6,7,8-tetrahydrofolate + glycine + H2O = (6S)-5,6,7,8-tetrahydrofolate + L-serine. It functions in the pathway one-carbon metabolism; tetrahydrofolate interconversion. Its pathway is amino-acid biosynthesis; glycine biosynthesis; glycine from L-serine: step 1/1. Its function is as follows. Catalyzes the reversible interconversion of serine and glycine with tetrahydrofolate (THF) serving as the one-carbon carrier. This reaction serves as the major source of one-carbon groups required for the biosynthesis of purines, thymidylate, methionine, and other important biomolecules. Also exhibits THF-independent aldolase activity toward beta-hydroxyamino acids, producing glycine and aldehydes, via a retro-aldol mechanism. This is Serine hydroxymethyltransferase from Rickettsia felis (strain ATCC VR-1525 / URRWXCal2) (Rickettsia azadi).